Here is a 288-residue protein sequence, read N- to C-terminus: Solute carrier family 25 member 45 (288 aa).

Solcar repeat units follow at residues 1–83, 97–191, and 199–286; these read MPVE…TLLV, PSYM…LCRQ, and PSSA…LLRW. 6 helical membrane-spanning segments follow: residues 6–26, 63–83, 100–120, 166–186, 202–222, and 266–286; these read FVAGWISGALGLVLGHPFDTV, IASIAVVNSVLFGVYSNTLLV, MHIFLAGCTGGFLQAYCLAPF, GAWALTLRDTPTVGIYFITYE, ATVLVAGGFAGIASWVAATPL, and SARAFPVNAVTFLSYEYLLRW.

The protein belongs to the mitochondrial carrier (TC 2.A.29) family.

It localises to the mitochondrion inner membrane. The sequence is that of Solute carrier family 25 member 45 (SLC25A45) from Homo sapiens (Human).